The chain runs to 377 residues: Succinyl-diaminopimelate desuccinylase (377 aa).

Zn(2+) is bound at residue histidine 68. Aspartate 70 is an active-site residue. Aspartate 101 provides a ligand contact to Zn(2+). Glutamate 135 acts as the Proton acceptor in catalysis. The Zn(2+) site is built by glutamate 136, glutamate 164, and histidine 350.

This sequence belongs to the peptidase M20A family. DapE subfamily. As to quaternary structure, homodimer. It depends on Zn(2+) as a cofactor. Co(2+) serves as cofactor.

It carries out the reaction N-succinyl-(2S,6S)-2,6-diaminopimelate + H2O = (2S,6S)-2,6-diaminopimelate + succinate. It participates in amino-acid biosynthesis; L-lysine biosynthesis via DAP pathway; LL-2,6-diaminopimelate from (S)-tetrahydrodipicolinate (succinylase route): step 3/3. Functionally, catalyzes the hydrolysis of N-succinyl-L,L-diaminopimelic acid (SDAP), forming succinate and LL-2,6-diaminopimelate (DAP), an intermediate involved in the bacterial biosynthesis of lysine and meso-diaminopimelic acid, an essential component of bacterial cell walls. This is Succinyl-diaminopimelate desuccinylase from Acinetobacter baumannii (strain SDF).